We begin with the raw amino-acid sequence, 91 residues long: uncharacterized protein (91 aa).

3 helical membrane passes run 4–21 (YAII…LRRG), 28–50 (IIEV…SHAV), and 60–82 (VKAF…GTYL).

The protein localises to the cell membrane. This is an uncharacterized protein from Archaeoglobus fulgidus (strain ATCC 49558 / DSM 4304 / JCM 9628 / NBRC 100126 / VC-16).